A 131-amino-acid chain; its full sequence is Serum amyloid A-3 protein (131 aa).

The N-terminal stretch at 1–18 is a signal peptide; sequence MNLSTGIIFCFLILGVSS. Over residues 94–105 the composition is skewed to basic and acidic residues; sequence MTRDQVREDSKA. Residues 94–131 form a disordered region; it reads MTRDQVREDSKADQFANEWGRSGKDPNHFRPAGLPDKY.

This sequence belongs to the SAA family. As to expression, expressed in the liver. Expressed in mammary epithelial cells. Expressed at high levels in mammary ductal cells and vesicle engorged alveoli, but absent from stromal and connective tissue and leukocytes. Secreted into colostrum and mastitic milk (at protein level). Low expression levels, if any, in normal milk (at protein level).

Its subcellular location is the secreted. In terms of biological role, major acute phase reactant. Apolipoprotein of the HDL complex. May have a role in protection of the mammary gland during remodeling and infection. In vitro exhibits antimicrobial activity against Escherichia coli, Streptococcus uberis and Pseudomonas aeruginosa. The sequence is that of Serum amyloid A-3 protein (SAA3) from Bos taurus (Bovine).